The primary structure comprises 65 residues: Large ribosomal subunit protein bL32 (65 aa).

Positions 1–19 are enriched in basic residues; it reads MAVQKSRKTPSKRGMRRSH. Residues 1–32 form a disordered region; that stretch reads MAVQKSRKTPSKRGMRRSHNALVKSTLSEDQE.

Belongs to the bacterial ribosomal protein bL32 family.

This chain is Large ribosomal subunit protein bL32, found in Vesicomyosocius okutanii subsp. Calyptogena okutanii (strain HA).